Reading from the N-terminus, the 221-residue chain is Endonuclease V (221 aa).

Residues Asp43 and Asp109 each coordinate Mg(2+).

It belongs to the endonuclease V family. The cofactor is Mg(2+).

It is found in the cytoplasm. It carries out the reaction Endonucleolytic cleavage at apurinic or apyrimidinic sites to products with a 5'-phosphate.. Functionally, DNA repair enzyme involved in the repair of deaminated bases. Selectively cleaves double-stranded DNA at the second phosphodiester bond 3' to a deoxyinosine leaving behind the intact lesion on the nicked DNA. This is Endonuclease V from Petrotoga mobilis (strain DSM 10674 / SJ95).